Here is a 341-residue protein sequence, read N- to C-terminus: N-acetyl-gamma-glutamyl-phosphate reductase 2 (341 aa).

Residue C146 is part of the active site.

Belongs to the NAGSA dehydrogenase family. Type 1 subfamily.

The protein localises to the cytoplasm. It carries out the reaction N-acetyl-L-glutamate 5-semialdehyde + phosphate + NADP(+) = N-acetyl-L-glutamyl 5-phosphate + NADPH + H(+). It functions in the pathway amino-acid biosynthesis; L-arginine biosynthesis; N(2)-acetyl-L-ornithine from L-glutamate: step 3/4. Catalyzes the NADPH-dependent reduction of N-acetyl-5-glutamyl phosphate to yield N-acetyl-L-glutamate 5-semialdehyde. The polypeptide is N-acetyl-gamma-glutamyl-phosphate reductase 2 (Lactiplantibacillus plantarum (strain ATCC BAA-793 / NCIMB 8826 / WCFS1) (Lactobacillus plantarum)).